Here is a 407-residue protein sequence, read N- to C-terminus: Substance-P receptor (407 aa).

The disordered stretch occupies residues 1-20 (MDNVLPVDSDLFPNTSTNTS). The Extracellular segment spans residues 1–31 (MDNVLPVDSDLFPNTSTNTSESNQFVQPTWQ). N-linked (GlcNAc...) asparagine glycosylation is found at Asn14 and Asn18. Residues 32 to 54 (IVLWAAAYTVIVVTSVVGNVVVI) form a helical membrane-spanning segment. Residues 55–64 (WIILAHKRMR) are Cytoplasmic-facing. The helical transmembrane segment at 65–86 (TVTNYFLVNLAFAEACMAAFNT) threads the bilayer. Over 87–106 (VVNFTYAVHNVWYYGLFYCK) the chain is Extracellular. Cys105 and Cys180 are joined by a disulfide. The helical transmembrane segment at 107–128 (FHNFFPIAALFASIYSMTAVAF) threads the bilayer. The Cytoplasmic portion of the chain corresponds to 129-148 (DRYMAIIHPLQPRLSATATK). A helical membrane pass occupies residues 149 to 169 (VVIFVIWVLALLLAFPQGYYS). The Extracellular portion of the chain corresponds to 170–194 (TTETMPSRVVCMIEWPEHPNRTYEK). A helical transmembrane segment spans residues 195-219 (AYHICVTVLIYFLPLLVIGYAYTVV). The Cytoplasmic portion of the chain corresponds to 220-248 (GITLWASEIPGDSSDRYHEQVSAKRKVVK). Residues 249–270 (MMIVVVCTFAICWLPFHIFFLL) form a helical membrane-spanning segment. Residues 271 to 283 (PYINPDLYLKKFI) lie on the Extracellular side of the membrane. A helical transmembrane segment spans residues 284 to 308 (QQVYLASMWLAMSSTMYNPIIYCCL). Topologically, residues 309–407 (NDRFRLGFKH…SSSFYSNMLA (99 aa)) are cytoplasmic. Cys322 is lipidated: S-palmitoyl cysteine. A disordered region spans residues 362–407 (VGAHEDEPEEGPKATPSSLDLTSNGSSRSNSKTMTESSSFYSNMLA). Polar residues predominate over residues 376-407 (TPSSLDLTSNGSSRSNSKTMTESSSFYSNMLA).

Belongs to the G-protein coupled receptor 1 family. In terms of assembly, interacts with ARRB1.

It localises to the cell membrane. Its function is as follows. This is a receptor for the tachykinin neuropeptide substance P. It is probably associated with G proteins that activate a phosphatidylinositol-calcium second messenger system. The rank order of affinity of this receptor to tachykinins is: substance P &gt; substance K &gt; neuromedin K. In Mus musculus (Mouse), this protein is Substance-P receptor (Tacr1).